The following is a 571-amino-acid chain: Urease subunit alpha (571 aa).

The Urease domain occupies 134 to 571 (GAIDTHIHFI…LPMAQRYFLF (438 aa)). H139, H141, and K222 together coordinate Ni(2+). Residue K222 is modified to N6-carboxylysine. H224 provides a ligand contact to substrate. Residues H251 and H277 each coordinate Ni(2+). The active-site Proton donor is the H325. D365 lines the Ni(2+) pocket.

The protein belongs to the metallo-dependent hydrolases superfamily. Urease alpha subunit family. As to quaternary structure, heterotrimer of UreA (gamma), UreB (beta) and UreC (alpha) subunits. Three heterotrimers associate to form the active enzyme. Requires Ni cation as cofactor. Carboxylation allows a single lysine to coordinate two nickel ions.

The protein localises to the cytoplasm. It catalyses the reaction urea + 2 H2O + H(+) = hydrogencarbonate + 2 NH4(+). It functions in the pathway nitrogen metabolism; urea degradation; CO(2) and NH(3) from urea (urease route): step 1/1. The protein is Urease subunit alpha of Bordetella parapertussis (strain 12822 / ATCC BAA-587 / NCTC 13253).